A 1113-amino-acid polypeptide reads, in one-letter code: Histone deacetylase 5 (1113 aa).

The tract at residues 1 to 22 (MNSPNESDGMSGREPSLGILPR) is disordered. K35 participates in a covalent cross-link: Glycyl lysine isopeptide (Lys-Gly) (interchain with G-Cter in SUMO2). 2 disordered regions span residues 39–63 (PGAMPSSMGGGGGGSPSPVELRGAL) and 187–272 (KEPT…SSPL). A compositionally biased stretch (basic and acidic residues) spans 238–249 (DSRDDFPLRKTA). S250 bears the Phosphoserine; by AMPK, CaMK1, SIK1 and PKD/PRKD1 mark. Positions 263–272 (KVAERRSSPL) are enriched in basic and acidic residues. T283 is modified (phosphothreonine; by PKC). A disordered region spans residues 472 to 494 (RTVGKLPRHRPLSRTQSSPLPQS). The segment covering 484–494 (SRTQSSPLPQS) has biased composition (low complexity). S488 carries the post-translational modification Phosphoserine; by AMPK, CaMK1, SIK1 and PKD/PRKD1. An N6-acetyllysine modification is found at K523. Positions 526-611 (TKTGELSRQP…PDEGPDLEES (86 aa)) are disordered. Acidic residues predominate over residues 571-610 (STQEDLEEEEEEEEEEEEDCIQVKDEDGESGPDEGPDLEE). Phosphoserine is present on residues S600 and S650. Residues 675–1019 (GVVYDTFMLK…VSALLSVELQ (345 aa)) are histone deacetylase. The Zn(2+) site is built by C687, C689, H695, and C772. Residue H824 is part of the active site. The Nuclear export signal signature appears at 1072-1113 (EEAETVSAMALLSVGAEQAQAVATQEHSPRPAEEPMEQEPAL). Residues 1088–1113 (EQAQAVATQEHSPRPAEEPMEQEPAL) are disordered. S1099 is subject to Phosphoserine.

This sequence belongs to the histone deacetylase family. HD type 2 subfamily. In terms of assembly, interacts with AHRR, BAHD1, BCOR, HDAC7, HDAC9, CTBP1, MEF2C, NCOR2, NRIP1, PHB2 and a 14-3-3 chaperone protein. Interacts with BCL6, DDIT3/CHOP, GRK5, KDM5B and MYOCD. Interacts with EP300 in the presence of TFAP2C. Interacts with ANKRA2. Interacts with CUL7 (as part of the 3M complex); negatively regulated by ANKRA2. Interacts with ZBTB7B; the interaction allows the recruitment of HDAC4 on CD8 loci for deacetylation and possible inhibition of CD8 genes expression. Interacts with RARA. Phosphorylated by AMPK, CaMK1, SIK1 and PRKD1 at Ser-250 and Ser-488. The phosphorylation is required for the export to the cytoplasm and inhibition. Phosphorylated by the PKC kinases PKN1 and PKN2, impairing nuclear import. Phosphorylated by GRK5, leading to nuclear export of HDAC5 and allowing MEF2-mediated transcription. In terms of processing, ubiquitinated. Polyubiquitination however does not lead to its degradation.

It is found in the nucleus. It localises to the cytoplasm. The catalysed reaction is N(6)-acetyl-L-lysyl-[histone] + H2O = L-lysyl-[histone] + acetate. Functionally, responsible for the deacetylation of lysine residues on the N-terminal part of the core histones (H2A, H2B, H3 and H4). Histone deacetylation gives a tag for epigenetic repression and plays an important role in transcriptional regulation, cell cycle progression and developmental events. Histone deacetylases act via the formation of large multiprotein complexes. Involved in muscle maturation by repressing transcription of myocyte enhancer MEF2C. During muscle differentiation, it shuttles into the cytoplasm, allowing the expression of myocyte enhancer factors. Serves as a corepressor of RARA and causes its deacetylation. In association with RARA, plays a role in the repression of microRNA-10a and thereby in the inflammatory response. The protein is Histone deacetylase 5 (Hdac5) of Mus musculus (Mouse).